The primary structure comprises 141 residues: Large ribosomal subunit protein uL11 (141 aa).

Belongs to the universal ribosomal protein uL11 family. As to quaternary structure, part of the ribosomal stalk of the 50S ribosomal subunit. Interacts with L10 and the large rRNA to form the base of the stalk. L10 forms an elongated spine to which L12 dimers bind in a sequential fashion forming a multimeric L10(L12)X complex. In terms of processing, one or more lysine residues are methylated.

Forms part of the ribosomal stalk which helps the ribosome interact with GTP-bound translation factors. The sequence is that of Large ribosomal subunit protein uL11 from Clostridium tetani (strain Massachusetts / E88).